A 462-amino-acid chain; its full sequence is Cytochrome P450 20A1 (462 aa).

Residues 4 to 24 traverse the membrane as a helical segment; the sequence is FAIFAVTFLLALVGAVLYLYP. Cysteine 409 is a binding site for heme.

It belongs to the cytochrome P450 family. It depends on heme as a cofactor.

The protein resides in the membrane. The protein is Cytochrome P450 20A1 (CYP20A1) of Homo sapiens (Human).